The sequence spans 298 residues: Lipoyl synthase (298 aa).

Residues cysteine 37, cysteine 42, cysteine 48, cysteine 63, cysteine 67, cysteine 70, and serine 277 each coordinate [4Fe-4S] cluster. Positions 49–266 constitute a Radical SAM core domain; sequence WGGGTATVML…KTLAESYGFL (218 aa).

It belongs to the radical SAM superfamily. Lipoyl synthase family. [4Fe-4S] cluster serves as cofactor.

It localises to the cytoplasm. The enzyme catalyses [[Fe-S] cluster scaffold protein carrying a second [4Fe-4S](2+) cluster] + N(6)-octanoyl-L-lysyl-[protein] + 2 oxidized [2Fe-2S]-[ferredoxin] + 2 S-adenosyl-L-methionine + 4 H(+) = [[Fe-S] cluster scaffold protein] + N(6)-[(R)-dihydrolipoyl]-L-lysyl-[protein] + 4 Fe(3+) + 2 hydrogen sulfide + 2 5'-deoxyadenosine + 2 L-methionine + 2 reduced [2Fe-2S]-[ferredoxin]. It functions in the pathway protein modification; protein lipoylation via endogenous pathway; protein N(6)-(lipoyl)lysine from octanoyl-[acyl-carrier-protein]: step 2/2. Catalyzes the radical-mediated insertion of two sulfur atoms into the C-6 and C-8 positions of the octanoyl moiety bound to the lipoyl domains of lipoate-dependent enzymes, thereby converting the octanoylated domains into lipoylated derivatives. This Myxococcus xanthus (strain DK1622) protein is Lipoyl synthase.